The following is a 623-amino-acid chain: NAD-dependent malic enzyme 1, mitochondrial (623 aa).

The N-terminal 38 residues, 1-38, are a transit peptide targeting the mitochondrion; the sequence is MGIANKLRLSSSSLSRILHRRILYSSAVRSFTTSEGHR. The Proton donor role is filled by Tyr-143. Residue Arg-196 participates in NAD(+) binding. Lys-214 acts as the Proton acceptor in catalysis. A divalent metal cation is bound by residues Glu-285, Asp-286, and Asp-309. Positions 309 and 464 each coordinate NAD(+).

This sequence belongs to the malic enzymes family. As to quaternary structure, homodimer. Heterodimer of two related subunits in NAD-MEH complex. Interacts with NAD-ME2. It depends on Mg(2+) as a cofactor. The cofactor is Mn(2+). Expressed in leaves, stems, flowers, and roots (at protein level).

The protein resides in the mitochondrion. It carries out the reaction (S)-malate + NAD(+) = pyruvate + CO2 + NADH. Its activity is regulated as follows. Activated by oxaloacetate (OAA), 2-ketoglutarate, succinate and fumarate as homodimer and by OAA, 2-ketoglutarate, succinate, fumarate and coenzyme A (acetyl-CoA and CoA) as heterodimer NAD-MEH. Functionally, involved in the regulation of sugars and amino acids metabolisms during the night period. This Arabidopsis thaliana (Mouse-ear cress) protein is NAD-dependent malic enzyme 1, mitochondrial (NAD-ME1).